The following is a 448-amino-acid chain: Lipoamide acyltransferase component of branched-chain alpha-keto acid dehydrogenase complex, mitochondrial (448 aa).

The Lipoyl-binding domain maps to 30 to 105 (VVQFKLSDIG…RVGQALIDVE (76 aa)). An N6-lipoyllysine modification is found at Lys-71. Disordered stretches follow at residues 108–146 (GNVEEPEQPKKEAASSSPEAPKSSAPKAPESAHSEGKVL) and 191–211 (TSGSTNIRTTHQAPQPSSKSY). A compositionally biased stretch (low complexity) spans 121 to 136 (ASSSPEAPKSSAPKAP). Residues 146 to 183 (LATPAVRRIAIENKIKLAEVRGTGKDGRVLKEDVLKFL) form the Peripheral subunit-binding (PSBD) domain. The span at 191–210 (TSGSTNIRTTHQAPQPSSKS) shows a compositional bias: polar residues. Residues Arg-257, Ser-272, Asp-315, Ser-365, Asn-366, Gly-390, and Ile-392 each contribute to the CoA site. Catalysis depends on residues His-418 and Asp-422.

Belongs to the 2-oxoacid dehydrogenase family. (R)-lipoate is required as a cofactor. As to expression, ubiquitously expressed.

It is found in the mitochondrion matrix. The protein localises to the cytoplasm. It localises to the cytosol. Its subcellular location is the cell projection. The protein resides in the dendrite. It is found in the cilium. The enzyme catalyses N(6)-[(R)-dihydrolipoyl]-L-lysyl-[protein] + 2-methylpropanoyl-CoA = N(6)-[(R)-S(8)-2-methylpropanoyldihydrolipoyl]-L-lysyl-[protein] + CoA. The branched-chain alpha-keto dehydrogenase complex catalyzes the overall conversion of alpha-keto acids to acyl-CoA and CO(2). It contains multiple copies of three enzymatic components: branched-chain alpha-keto acid decarboxylase (E1), lipoamide acyltransferase (E2) and lipoamide dehydrogenase (E3). Within this complex, the catalytic function of this enzyme is to accept, and to transfer to coenzyme A, acyl groups that are generated by the branched-chain alpha-keto acid decarboxylase component. Required for the catabolism of branched-chain amino acids and the subsequent synthesis of monomethyl branched-chain fatty acids, which are important for regulating postembryonic growth. The sequence is that of Lipoamide acyltransferase component of branched-chain alpha-keto acid dehydrogenase complex, mitochondrial from Caenorhabditis elegans.